The following is a 357-amino-acid chain: uncharacterized protein (357 aa).

Residues 6–32 (CIVCRQKKIKCDRKNPCTNCEQAGEKC) constitute a DNA-binding region (zn(2)-C6 fungal-type).

Its subcellular location is the nucleus. This is an uncharacterized protein from Schizosaccharomyces pombe (strain 972 / ATCC 24843) (Fission yeast).